A 421-amino-acid polypeptide reads, in one-letter code: Magnesium transporter MRS2-5 (421 aa).

The next 2 membrane-spanning stretches (helical) occupy residues 357-377 (LLLTAATFVAAIFAAVTAVFG) and 393-413 (YVLLITGIGCGFLYFGFVLYF). Positions 377–379 (GMN) match the Required for magnesium transport activity motif.

This sequence belongs to the CorA metal ion transporter (MIT) (TC 1.A.35.5) family. As to expression, expressed in the whole plant.

The protein localises to the membrane. Its function is as follows. Magnesium transporter that may mediate the influx of magnesium. The polypeptide is Magnesium transporter MRS2-5 (MRS2-5) (Arabidopsis thaliana (Mouse-ear cress)).